A 163-amino-acid chain; its full sequence is Succinate dehydrogenase assembly factor 2-A, mitochondrial (163 aa).

A mitochondrion-targeting transit peptide spans Met1 to Met23.

Belongs to the SDHAF2 family. In terms of assembly, interacts with the flavoprotein subunit within the SDH catalytic dimer.

The protein resides in the mitochondrion matrix. Plays an essential role in the assembly of succinate dehydrogenase (SDH), an enzyme complex (also referred to as respiratory complex II) that is a component of both the tricarboxylic acid (TCA) cycle and the mitochondrial electron transport chain, and which couples the oxidation of succinate to fumarate with the reduction of ubiquinone (coenzyme Q) to ubiquinol. Required for flavinylation (covalent attachment of FAD) of the flavoprotein subunit of the SDH catalytic dimer. The sequence is that of Succinate dehydrogenase assembly factor 2-A, mitochondrial from Drosophila sechellia (Fruit fly).